Here is a 380-residue protein sequence, read N- to C-terminus: Septin homolog spn6 (380 aa).

Residues 27-297 form the Septin-type G domain; the sequence is KECGLTIMLC…ERYRREQLTN (271 aa). Residues 37–44 form a G1 motif region; that stretch reads GASGTGKT. Residues 37-44, threonine 72, glycine 98, 177-185, and arginine 246 each bind GTP; these read GASGTGKT and KADTFTTPE. The interval 95–98 is G3 motif; that stretch reads DTPG. Residues 176-179 are G4 motif; the sequence is AKAD. The stretch at 304–380 forms a coiled coil; sequence KLKKEHYERL…KSYKGRGHKK (77 aa).

It belongs to the TRAFAC class TrmE-Era-EngA-EngB-Septin-like GTPase superfamily. Septin GTPase family. Component of the sporulation-specific septin complex composed of at least spn2, spn5, spn6 and spn7.

Its subcellular location is the cytoplasm. It is found in the forespore membrane. Functionally, septin-like protein involved in the correct orientation of forespore membrane extension during sporulation. This is Septin homolog spn6 (spn6) from Schizosaccharomyces pombe (strain 972 / ATCC 24843) (Fission yeast).